The primary structure comprises 170 residues: Fluoride-specific ion channel FluC 2 (170 aa).

The next 4 membrane-spanning stretches (helical) occupy residues 8–28 (ALVF…TVWI), 55–75 (IALL…VGMI), 84–104 (TFWG…AAAV), and 114–134 (ILIG…AAAM). Glycine 92 and threonine 95 together coordinate Na(+).

This sequence belongs to the fluoride channel Fluc/FEX (TC 1.A.43) family.

Its subcellular location is the cell membrane. It carries out the reaction fluoride(in) = fluoride(out). Na(+) is not transported, but it plays an essential structural role and its presence is essential for fluoride channel function. Its function is as follows. Fluoride-specific ion channel. Important for reducing fluoride concentration in the cell, thus reducing its toxicity. The chain is Fluoride-specific ion channel FluC 2 from Corynebacterium jeikeium (strain K411).